Here is a 248-residue protein sequence, read N- to C-terminus: Tabinhibitin 10 (248 aa).

Residues 1-22 (MTLKRIFCAALALIVLQSVASA) form the signal peptide. An SCP domain is found at 66–208 (LQKTNWLRGV…NYKGAFHCSL (143 aa)). A Cell attachment site motif is present at residues 221-223 (RGD).

The protein belongs to the CRISP family. As to expression, expressed in salivary glands.

Its subcellular location is the secreted. Its function is as follows. Inhibits platelet aggregation induced by all agonists tested (ADP, arachidonic acid, the thromboxane A2 analog U46619, thrombin, and snake venom snaclecs (TMVA that activates platelet through GPIB, and stejnulxin that specifically acts through GPVI (GP6))). May act by competing with fibrinogen for binding to glycoprotein IIb/IIIa (ITGA2B/ITGB3). The sequence is that of Tabinhibitin 10 from Tabanus yao (Horsefly).